Reading from the N-terminus, the 106-residue chain is Large ribosomal subunit protein eL42 (106 aa).

The protein belongs to the eukaryotic ribosomal protein eL42 family.

This chain is Large ribosomal subunit protein eL42 (RPL44), found in Schwanniomyces occidentalis (Yeast).